The chain runs to 101 residues: Small ribosomal subunit protein uS14 (101 aa).

Belongs to the universal ribosomal protein uS14 family. In terms of assembly, part of the 30S ribosomal subunit. Contacts proteins S3 and S10.

Binds 16S rRNA, required for the assembly of 30S particles and may also be responsible for determining the conformation of the 16S rRNA at the A site. In Delftia acidovorans (strain DSM 14801 / SPH-1), this protein is Small ribosomal subunit protein uS14.